The following is a 640-amino-acid chain: Replication protein A 70 kDa DNA-binding subunit A (640 aa).

The OB DNA-binding region spans 211–293; it reads AIKARVTAKG…NHLKNEWEIF (83 aa). A C4-type zinc finger spans residues 503-529; the sequence is CPLMIGDKQCNKKVTRSGTNRWLCDRC.

Belongs to the replication factor A protein 1 family. As to quaternary structure, heterotrimer of RPA1, RPA2 and RPA3 (canonical replication protein A complex). Interacts with RPA2A. As to expression, expressed in roots, leaves, stalks and flower buds.

The protein localises to the nucleus. In terms of biological role, component of the replication protein A complex (RPA) required for DNA recombination, repair and replication. The activity of RPA is mediated by single-stranded DNA binding and protein interactions. Plays an essential role at later stages of meiotic recombination events required for the formation of class I crossovers. Is essential for normal progression through meiosis in pollen mother cells. Is involved in repair of double-strand DNA breaks (DSBs) induced by genotoxic stresses, but does not seem to be required for the repair of meiotic DSBs. This is Replication protein A 70 kDa DNA-binding subunit A (RPA1A) from Arabidopsis thaliana (Mouse-ear cress).